A 316-amino-acid polypeptide reads, in one-letter code: GTP cyclohydrolase FolE2 2 (316 aa).

Belongs to the GTP cyclohydrolase IV family.

It catalyses the reaction GTP + H2O = 7,8-dihydroneopterin 3'-triphosphate + formate + H(+). It functions in the pathway cofactor biosynthesis; 7,8-dihydroneopterin triphosphate biosynthesis; 7,8-dihydroneopterin triphosphate from GTP: step 1/1. Converts GTP to 7,8-dihydroneopterin triphosphate. This is GTP cyclohydrolase FolE2 2 from Burkholderia orbicola (strain MC0-3).